The chain runs to 241 residues: Uracil-DNA glycosylase (241 aa).

The active-site Proton acceptor is Asp73.

The protein belongs to the uracil-DNA glycosylase (UDG) superfamily. UNG family.

It is found in the cytoplasm. The enzyme catalyses Hydrolyzes single-stranded DNA or mismatched double-stranded DNA and polynucleotides, releasing free uracil.. Excises uracil residues from the DNA which can arise as a result of misincorporation of dUMP residues by DNA polymerase or due to deamination of cytosine. The polypeptide is Uracil-DNA glycosylase (Agrobacterium fabrum (strain C58 / ATCC 33970) (Agrobacterium tumefaciens (strain C58))).